Consider the following 30-residue polypeptide: Superoxide dismutase [Cu-Zn] 1 (30 aa).

Belongs to the Cu-Zn superoxide dismutase family. The cofactor is Cu cation. Requires Zn(2+) as cofactor. In terms of tissue distribution, expressed in fruits, leaves and pollen grains.

It localises to the cytoplasm. It is found in the endoplasmic reticulum. The enzyme catalyses 2 superoxide + 2 H(+) = H2O2 + O2. Inhibited by KCN and H(2)O(2). In terms of biological role, destroys radicals which are normally produced within the cells and which are toxic to biological systems. Probably involved in the protection against oxidative stress during pollen development. The sequence is that of Superoxide dismutase [Cu-Zn] 1 from Olea europaea (Common olive).